The following is a 237-amino-acid chain: Ribonuclease PH (237 aa).

Phosphate is bound by residues Arg86 and 124–126; that span reads GTR.

This sequence belongs to the RNase PH family. Homohexameric ring arranged as a trimer of dimers.

The catalysed reaction is tRNA(n+1) + phosphate = tRNA(n) + a ribonucleoside 5'-diphosphate. Phosphorolytic 3'-5' exoribonuclease that plays an important role in tRNA 3'-end maturation. Removes nucleotide residues following the 3'-CCA terminus of tRNAs; can also add nucleotides to the ends of RNA molecules by using nucleoside diphosphates as substrates, but this may not be physiologically important. Probably plays a role in initiation of 16S rRNA degradation (leading to ribosome degradation) during starvation. This Shewanella piezotolerans (strain WP3 / JCM 13877) protein is Ribonuclease PH.